The chain runs to 310 residues: tRNA dimethylallyltransferase (310 aa).

24–31 is a binding site for ATP; that stretch reads GPTASGKT. Residue 26–31 participates in substrate binding; the sequence is TASGKT. Positions 49 to 52 are interaction with substrate tRNA; the sequence is DSRQ.

This sequence belongs to the IPP transferase family. Monomer. Requires Mg(2+) as cofactor.

It carries out the reaction adenosine(37) in tRNA + dimethylallyl diphosphate = N(6)-dimethylallyladenosine(37) in tRNA + diphosphate. Its function is as follows. Catalyzes the transfer of a dimethylallyl group onto the adenine at position 37 in tRNAs that read codons beginning with uridine, leading to the formation of N6-(dimethylallyl)adenosine (i(6)A). The protein is tRNA dimethylallyltransferase of Synechococcus sp. (strain CC9311).